The chain runs to 288 residues: Probable prolyl 4-hydroxylase 6 (288 aa).

Residues 1 to 4 (MDSQ) are Cytoplasmic-facing. Residues 5 to 27 (YFLAFSLSLLLIFSQISSFSFSV) form a helical; Signal-anchor for type II membrane protein membrane-spanning segment. Residues 28 to 288 (DPTRITQLSW…GFCRKSCKAC (261 aa)) lie on the Lumenal side of the membrane. Positions 116–238 (NGEALQILHY…KWSATRWIHV (123 aa)) constitute a Fe2OG dioxygenase domain. His134 and Asp136 together coordinate Fe cation. N-linked (GlcNAc...) asparagine glycosylation is found at Asn160 and Asn210. His219 provides a ligand contact to Fe cation. Residue Lys229 participates in 2-oxoglutarate binding. Residues 248–288 (CVDDHESCQEWADAGECEKNPMYMVGSETSLGFCRKSCKAC) form the ShKT domain. 3 disulfides stabilise this stretch: Cys248–Cys288, Cys255–Cys281, and Cys264–Cys285.

This sequence belongs to the P4HA family. The cofactor is Fe(2+). L-ascorbate serves as cofactor.

It localises to the endoplasmic reticulum membrane. The catalysed reaction is L-prolyl-[collagen] + 2-oxoglutarate + O2 = trans-4-hydroxy-L-prolyl-[collagen] + succinate + CO2. Its function is as follows. Catalyzes the post-translational formation of 4-hydroxyproline in -Xaa-Pro-Gly- sequences in proline-rich peptide sequences of plant glycoproteins and other proteins. Hydroxyprolines are important constituent of many plant cell wall glycoproteins such as extensins, hydroxyproline-rich glycoproteins, lectins and arabinogalactan proteins. This Arabidopsis thaliana (Mouse-ear cress) protein is Probable prolyl 4-hydroxylase 6.